The chain runs to 294 residues: Nucleotide-binding protein lp_0779 (294 aa).

12 to 19 (GMSGAGKT) contributes to the ATP binding site. 62–65 (DLRS) is a GTP binding site.

Belongs to the RapZ-like family.

Displays ATPase and GTPase activities. This is Nucleotide-binding protein lp_0779 from Lactiplantibacillus plantarum (strain ATCC BAA-793 / NCIMB 8826 / WCFS1) (Lactobacillus plantarum).